The following is a 64-amino-acid chain: Small hydrophobic protein (64 aa).

Residues 1–20 (MENTSITIEFSSKFWPYFTL) lie on the Intravirion side of the membrane. Residues 6 to 15 (ITIEFSSKFW) form an interaction with host BCAP31 region. The helical; Signal-anchor for type II membrane protein transmembrane segment at 21–44 (IHMITTIISLLIIISIMIAILNKL) threads the bilayer. The tract at residues 38–43 (IAILNK) is interaction with small-molecule inhibitor. Topologically, residues 45-64 (CEYNVFHNKTFELPRARVNT) are virion surface. N-linked (GlcNAc...) asparagine; by host glycosylation is present at Asn52.

It belongs to the orthopneumovirus small hydrophobic protein family. As to quaternary structure, homopentamer forming a funnel-like pore. Interacts with glycoprotein G; this interaction occurs on the surface of virion particles and infected cells. Interacts with host BCAP31 (via C-terminus); this interaction is direct. Four species of SH have been detected in infected cell cytoplasm: a 7.5 kDa non-glycosylated form (SH0), a 13-15 kDa form that contains one or two N-linked carbohydrate side chains of the high-mannose type (SHg), a 21-30 kDa polylactosaminoglycan-modified form of the protein (SHp), and the isoform generated by alternative translational initiation. Of these different forms, SH0 is by far the most abundant protein detected during virus infection. In terms of processing, tyrosine phosphorylated.

The protein resides in the virion membrane. Its subcellular location is the host cell membrane. It localises to the host Golgi apparatus membrane. The protein localises to the host endoplasmic reticulum membrane. Its activity is regulated as follows. Channel activity is inhibited by copper. Also inhibited by small-molecule pyronin B. Its function is as follows. Viroporin that forms a homopentameric ion channel displaying low ion selectivity. May play a role in virus morphogenesis and pathogenicity at various stages of the viral life cycle. Accumulates at the membrane of the Golgi apparatus in infected cells and may facilitate virus release by modifying the secretory pathway. May enhance host membrane permeability and disrupt cellular ion homeostasis, which can be sensed as damage-associated molecular patterns/danger signals, triggering NLRP3 inflammasome activation and inflammatory immune response. Also inhibits host TNFA-mediated signaling pathway and may delay apoptosis, allowing time for the virus to replicate. This is Small hydrophobic protein from Homo sapiens (Human).